Here is an 805-residue protein sequence, read N- to C-terminus: Rho GTPase-activating protein 42 (805 aa).

The BAR domain maps to 7–262; it reads EFSDSFLDSP…IRSAEQDFKA (256 aa). A coiled-coil region spans residues 225–262; that stretch reads KQQLQFNLQNTRNNFESTRQEVENLMRRIRSAEQDFKA. The PH domain maps to 265 to 374; that stretch reads QWTMEGFLYV…WMEAMDGKEP (110 aa). Positions 376-572 constitute a Rho-GAP domain; sequence YTLPALLSKK…ILIENYDKIF (197 aa). 3 disordered regions span residues 576-600, 625-725, and 765-805; these read PDPN…RSKA, SDTF…SELL, and VSRS…PGSV. Low complexity predominate over residues 626 to 654; the sequence is DTFSSSPSSTPMGSMESLSSHSSEQNSCS. Polar residues predominate over residues 670 to 693; it reads LCWTTPSPSTNGPKSPACTTSPDS. The segment covering 694 to 704 has biased composition (basic and acidic residues); the sequence is SSKEDANKTDG. The span at 710-721 shows a compositional bias: polar residues; that stretch reads LSTSPGDRSSPA. Residues 782-793 show a composition bias toward basic and acidic residues; that stretch reads PPKDGMRFRDDS.

Functionally, may influence blood pressure by functioning as a GTPase-activating protein in vascular smooth muscle. The protein is Rho GTPase-activating protein 42 of Danio rerio (Zebrafish).